The following is a 786-amino-acid chain: uncharacterized protein (786 aa).

361–362 (WD) serves as a coordination point for substrate. Glu-488 (proton donor) is an active-site residue. 590 to 591 (KQ) contacts substrate. The segment at 762–786 (TRKPLLPPPPQPPGREPVHRRALAR) is disordered. Pro residues predominate over residues 766 to 776 (LLPPPPQPPGR).

The protein belongs to the glycosyl hydrolase 65 family.

This is an uncharacterized protein from Mycobacterium tuberculosis (strain CDC 1551 / Oshkosh).